A 107-amino-acid polypeptide reads, in one-letter code: Small ribosomal subunit protein uS10m (107 aa).

It belongs to the universal ribosomal protein uS10 family.

The protein resides in the mitochondrion. The chain is Small ribosomal subunit protein uS10m (RPS10) from Prototheca wickerhamii.